The following is a 778-amino-acid chain: Endonuclease MutS2 (778 aa).

ATP is bound at residue glycine 328–threonine 335. The Smr domain occupies leucine 702–lysine 777.

The protein belongs to the DNA mismatch repair MutS family. MutS2 subfamily. Homodimer. Binds to stalled ribosomes, contacting rRNA.

Functionally, endonuclease that is involved in the suppression of homologous recombination and thus may have a key role in the control of bacterial genetic diversity. Its function is as follows. Acts as a ribosome collision sensor, splitting the ribosome into its 2 subunits. Detects stalled/collided 70S ribosomes which it binds and splits by an ATP-hydrolysis driven conformational change. Acts upstream of the ribosome quality control system (RQC), a ribosome-associated complex that mediates the extraction of incompletely synthesized nascent chains from stalled ribosomes and their subsequent degradation. Probably generates substrates for RQC. The sequence is that of Endonuclease MutS2 from Streptococcus pneumoniae (strain Hungary19A-6).